Here is a 150-residue protein sequence, read N- to C-terminus: Transcriptional repressor NrdR (150 aa).

A zinc finger lies at 3 to 34; the sequence is CPFCAFADSKVVDSRPDKGGSTIRRRRECESC. Residues 49–139 form the ATP-cone domain; the sequence is PLVIKKDGRR…VYRSFKDITE (91 aa).

This sequence belongs to the NrdR family. Requires Zn(2+) as cofactor.

Functionally, negatively regulates transcription of bacterial ribonucleotide reductase nrd genes and operons by binding to NrdR-boxes. The chain is Transcriptional repressor NrdR from Geotalea uraniireducens (strain Rf4) (Geobacter uraniireducens).